Reading from the N-terminus, the 213-residue chain is Probable thymidylate kinase 2 (213 aa).

10-17 (GIDGSGKS) is a binding site for ATP.

This sequence belongs to the thymidylate kinase family.

The catalysed reaction is dTMP + ATP = dTDP + ADP. In Saccharolobus solfataricus (strain ATCC 35092 / DSM 1617 / JCM 11322 / P2) (Sulfolobus solfataricus), this protein is Probable thymidylate kinase 2 (tmk2).